Consider the following 186-residue polypeptide: Crossover junction endodeoxyribonuclease RuvC (186 aa).

Catalysis depends on residues aspartate 7, glutamate 67, and aspartate 140. 3 residues coordinate Mg(2+): aspartate 7, glutamate 67, and aspartate 140.

This sequence belongs to the RuvC family. In terms of assembly, homodimer which binds Holliday junction (HJ) DNA. The HJ becomes 2-fold symmetrical on binding to RuvC with unstacked arms; it has a different conformation from HJ DNA in complex with RuvA. In the full resolvosome a probable DNA-RuvA(4)-RuvB(12)-RuvC(2) complex forms which resolves the HJ. Mg(2+) is required as a cofactor.

It is found in the cytoplasm. The enzyme catalyses Endonucleolytic cleavage at a junction such as a reciprocal single-stranded crossover between two homologous DNA duplexes (Holliday junction).. The RuvA-RuvB-RuvC complex processes Holliday junction (HJ) DNA during genetic recombination and DNA repair. Endonuclease that resolves HJ intermediates. Cleaves cruciform DNA by making single-stranded nicks across the HJ at symmetrical positions within the homologous arms, yielding a 5'-phosphate and a 3'-hydroxyl group; requires a central core of homology in the junction. The consensus cleavage sequence is 5'-(A/T)TT(C/G)-3'. Cleavage occurs on the 3'-side of the TT dinucleotide at the point of strand exchange. HJ branch migration catalyzed by RuvA-RuvB allows RuvC to scan DNA until it finds its consensus sequence, where it cleaves and resolves the cruciform DNA. The chain is Crossover junction endodeoxyribonuclease RuvC from Chloroherpeton thalassium (strain ATCC 35110 / GB-78).